A 63-amino-acid polypeptide reads, in one-letter code: Potassium channel toxin alpha-KTx 21.1 (63 aa).

Positions 1-27 (MQFSGVVLILISMTLVNFVFFETKVEA) are cleaved as a signal peptide. 3 cysteine pairs are disulfide-bonded: Cys33–Cys53, Cys38–Cys58, and Cys42–Cys60.

It belongs to the short scorpion toxin superfamily. Potassium channel inhibitor family. Alpha-KTx 21 subfamily. Expressed by the venom gland.

It is found in the secreted. Functionally, reversibly and voltage-independently blocks voltage-gated potassium channels rKv1.2/KCNA2 (73%) (IC(50)=196 nM), hKv1.3/KCNA3 (50%) (IC(50)=508 nM), Shaker IR (30%), rKv1.6/KCNA6 (22%) (at 0.5 uM). Interaction of Ts15 with Kv1.3/KCNA3 is stronger than its interaction with Kv1.2/KCNA2. The chain is Potassium channel toxin alpha-KTx 21.1 from Tityus serrulatus (Brazilian scorpion).